A 96-amino-acid polypeptide reads, in one-letter code: C-C motif chemokine 1 (96 aa).

The first 23 residues, 1–23, serve as a signal peptide directing secretion; that stretch reads MQIITTALVCLLLAGMWPEDVDS. Disulfide bonds link Cys-33/Cys-57, Cys-34/Cys-73, and Cys-49/Cys-91. A glycan (N-linked (GlcNAc...) asparagine) is linked at Asn-52.

The protein belongs to the intercrine beta (chemokine CC) family. In terms of assembly, monomer.

Its subcellular location is the secreted. Cytokine that is chemotactic for monocytes but not for neutrophils. Binds to CCR8. This Homo sapiens (Human) protein is C-C motif chemokine 1 (CCL1).